The primary structure comprises 723 residues: Transmembrane channel-like protein 7 (723 aa).

Residues 1-21 form a disordered region; the sequence is MSESSASALQLGRPSRQPAVH. Residues 1–168 are Extracellular-facing; sequence MSESSASALQ…GIQSYFSFLR (168 aa). Asn-24 is a glycosylation site (N-linked (GlcNAc...) asparagine). Residues 51–70 form a disordered region; sequence RRRTTVHSRDKQSGTLLKST. Residue Asn-84 is glycosylated (N-linked (GlcNAc...) asparagine). Phosphoserine is present on Ser-89. The N-linked (GlcNAc...) asparagine glycan is linked to Asn-96. Residues 169-189 form a helical membrane-spanning segment; the sequence is FLVLLNLVIFLIIFMLVLLPI. Topologically, residues 190–219 are cytoplasmic; the sequence is LLTKYKITNSSFVLIPFKDTDIQCTVYPVS. The helical transmembrane segment at 220-240 threads the bilayer; the sequence is SSGLIYFYSYIIDLLSGTGFL. Over 241–263 the chain is Extracellular; it reads EETSLFYGHYTIDGVKFQNFTYD. Asn-259 is a glycosylation site (N-linked (GlcNAc...) asparagine). Residues 264–284 form a helical membrane-spanning segment; the sequence is LPLAYLISTIAYLALSLLWIV. Over 285–362 the chain is Cytoplasmic; it reads KRSVEGFKIN…EETIRIYSLR (78 aa). The chain crosses the membrane as a helical span at residues 363–383; it reads LFLNCIVLAVLGACFYAIYVA. At 384 to 404 the chain is on the extracellular side; that stretch reads TVFSQEHMKKEIDKMVFGENL. The helical transmembrane segment at 405–425 threads the bilayer; sequence LILYLPSIVITLANFITPMIF. The Cytoplasmic segment spans residues 426 to 494; sequence AKIIRYEDYS…PCWETQVGQE (69 aa). The chain crosses the membrane as a helical span at residues 495–515; sequence MYKLMIFDFIIILAVTLFVDF. Over 516 to 555 the chain is Extracellular; that stretch reads PRKLLVTYCSSWKLIQCWGQQEFAIPDNVLGIVYGQTICW. Residues 556–576 traverse the membrane as a helical segment; it reads IGAFFSPLLPAIATLKFIIIF. At 577–601 the chain is on the cytoplasmic side; sequence YVKEWSLLYTCRPSPRPFRASNSNF. The chain crosses the membrane as a helical span at residues 602 to 622; that stretch reads FFLLVLLIGLCLAIIPLTISI. Residues 623–665 are Extracellular-facing; it reads SRIPSSKACGPFTNFNTTWEVIPKTVSTFPSSLQSFIHGVTSE. N-linked (GlcNAc...) asparagine glycosylation is present at Asn-638. The chain crosses the membrane as a helical span at residues 666–686; it reads AFAVPFFMIICLIMFYFIALA. Over 687-723 the chain is Cytoplasmic; that stretch reads GAHKRVVIQLREQLSLESRDKRYLIQKLTEAQRDTRN.

Belongs to the TMC family. As to quaternary structure, interacts with PIEZO2; the interaction inhibits PIEZO2-conducted mechanically activated currents.

The protein localises to the membrane. Its function is as follows. Acts as an inhibitory modulator of PIEZO2 mechanosensitive channel in dorsal root ganglion (DRG) neurons through physical interactions or interference with the interaction between Piezo2 and the cytoskeleton. The chain is Transmembrane channel-like protein 7 (TMC7) from Macaca fascicularis (Crab-eating macaque).